The sequence spans 118 residues: V-type proton ATPase subunit G 2 (118 aa).

The stretch at 8–57 (IQQLLQAEKRAAEKVADARKRKARRLKQAKEEAQMEVDQYRREREQEFQS) forms a coiled coil. Residues 25 to 90 (ARKRKARRLK…VQGMQSSQQR (66 aa)) are disordered. Over residues 35-55 (QAKEEAQMEVDQYRREREQEF) the composition is skewed to basic and acidic residues. Polar residues-rich tracts occupy residues 56-69 (QSKQQAAMGSQGNL) and 78-89 (RRQVQGMQSSQQ).

Belongs to the V-ATPase G subunit family. V-ATPase is a heteromultimeric enzyme made up of two complexes: the ATP-hydrolytic V1 complex and the proton translocation V0 complex. The V1 complex consists of three catalytic AB heterodimers that form a heterohexamer, three peripheral stalks each consisting of EG heterodimers, one central rotor including subunits D and F, and the regulatory subunits C and H. The proton translocation complex V0 consists of the proton transport subunit a, a ring of proteolipid subunits c9c'', rotary subunit d, subunits e and f, and the accessory subunits ATP6AP1/Ac45 and ATP6AP2/PRR. In terms of tissue distribution, expressed in brain (at protein level).

It is found in the melanosome. The protein resides in the cytoplasmic vesicle. Its subcellular location is the clathrin-coated vesicle membrane. Functionally, subunit of the V1 complex of vacuolar(H+)-ATPase (V-ATPase), a multisubunit enzyme composed of a peripheral complex (V1) that hydrolyzes ATP and a membrane integral complex (V0) that translocates protons. V-ATPase is responsible for acidifying and maintaining the pH of intracellular compartments and in some cell types, is targeted to the plasma membrane, where it is responsible for acidifying the extracellular environment. This is V-type proton ATPase subunit G 2 from Bos taurus (Bovine).